The primary structure comprises 199 residues: Recombination protein RecR (199 aa).

The C4-type zinc-finger motif lies at Cys58–Cys73. In terms of domain architecture, Toprim spans Gln81–Pro176.

It belongs to the RecR family.

May play a role in DNA repair. It seems to be involved in an RecBC-independent recombinational process of DNA repair. It may act with RecF and RecO. The sequence is that of Recombination protein RecR from Koribacter versatilis (strain Ellin345).